A 260-amino-acid chain; its full sequence is Isopentenyl phosphate kinase (260 aa).

Residue Lys6–Ser10 coordinates ATP. Gly55 contributes to the substrate binding site. Gly56 lines the ATP pocket. Residues His60 and Gly159 each coordinate substrate. Residues Asp180, Gly217, and Lys221 each contribute to the ATP site.

The protein belongs to the isopentenyl phosphate kinase family. In terms of assembly, homodimer.

It catalyses the reaction isopentenyl phosphate + ATP = isopentenyl diphosphate + ADP. In terms of biological role, catalyzes the formation of isopentenyl diphosphate (IPP), the building block of all isoprenoids. Has no activity with farnesyl phosphate. This Methanocaldococcus jannaschii (strain ATCC 43067 / DSM 2661 / JAL-1 / JCM 10045 / NBRC 100440) (Methanococcus jannaschii) protein is Isopentenyl phosphate kinase.